Consider the following 143-residue polypeptide: Ribosome maturation factor RimP (143 aa).

It belongs to the RimP family.

The protein localises to the cytoplasm. Its function is as follows. Required for maturation of 30S ribosomal subunits. The chain is Ribosome maturation factor RimP from Borrelia hermsii (strain HS1 / DAH).